We begin with the raw amino-acid sequence, 52 residues long: UPF0057 membrane protein At1g57550 (52 aa).

2 helical membrane passes run 4–24 (FLEVLCAIFIPPVGVFLRYGL) and 30–50 (VCLLLTLFAFIPGLIYAIYVL).

The protein belongs to the UPF0057 (PMP3) family.

It localises to the membrane. This is UPF0057 membrane protein At1g57550 from Arabidopsis thaliana (Mouse-ear cress).